A 216-amino-acid polypeptide reads, in one-letter code: Pyrophosphatase PpaX (216 aa).

Catalysis depends on aspartate 9, which acts as the Nucleophile.

It belongs to the HAD-like hydrolase superfamily. PpaX family. Mg(2+) is required as a cofactor.

It catalyses the reaction diphosphate + H2O = 2 phosphate + H(+). Hydrolyzes pyrophosphate formed during P-Ser-HPr dephosphorylation by HPrK/P. Might play a role in controlling the intracellular pyrophosphate pool. The sequence is that of Pyrophosphatase PpaX from Bacillus cereus (strain G9842).